The following is a 148-amino-acid chain: Photosystem I reaction center subunit XI (148 aa).

The next 3 membrane-spanning stretches (helical) occupy residues 48 to 68 (LEIGLAHGYFLIGPFAQLGPL), 73 to 93 (IGLLAGFLSTIGLILILTLGL), and 122 to 142 (GGFFVGACGSAGFAFICLSSI).

Belongs to the PsaL family.

Its subcellular location is the plastid. The protein resides in the chloroplast thylakoid membrane. This chain is Photosystem I reaction center subunit XI, found in Thalassiosira pseudonana (Marine diatom).